Here is a 341-residue protein sequence, read N- to C-terminus: DnaJ homolog subfamily C member 22 (341 aa).

The region spanning 4–50 (GLLMTYALWAFGGPVGLHHLYLGRDSHALLWMLTLGGGGLGWLWEFW) is the TM2 domain. A run of 7 helical transmembrane segments spans residues 5–25 (LLMT…HLYL), 30–50 (HALL…WEFW), 81–101 (FASQ…SLSS), 105–125 (FYIV…AAVG), 135–155 (LGAA…ILPI), 185–205 (VGLA…YNTA), and 232–252 (VESV…APGF). Residues 277-341 (LAHQVLGIPE…QPKKPRASWR (65 aa)) enclose the J domain.

It is found in the membrane. May function as a co-chaperone. The chain is DnaJ homolog subfamily C member 22 (Dnajc22) from Rattus norvegicus (Rat).